The chain runs to 430 residues: MSMITEIYAREILDSRGNPSVEVEVFTEDGGFGRALVPSGASTGEHEAVELRDGDKSRYLGKGVLKAVANVNDTIAPELIGYDVFDQNAIDAKMIELDGTPNKAKLGANAILGVSMAAAHAAADELGLPLYTYLGGFNAKTLPTPMMNIINGGSHADNNVDFQEFMIMPVGAPTFREALRMGAEVFHALKSVLSGMGLNTAVGDEGGFAPNLKSNEEAITVILEAIEKAGYKPGEDVYLAMDVASSEFYDKSTGKYELAGEGKSLTTAELVDFYAELVDKYPILSIEDGCDENDWDGHKLLTDKIGHKVQLVGDDLFVTNTSKLAEGIEKGIANSILIKVNQIGTLTETFDAIEMAKKAGYTAVVSHRSGETEDATIADIAVATNAGQIKTGSLSRTDRIAKYNQLLRIEDMLGDVAKYDGIKSFYNLKK.

Glutamine 163 contributes to the (2R)-2-phosphoglycerate binding site. The active-site Proton donor is glutamate 205. Positions 242, 287, and 314 each coordinate Mg(2+). Positions 339, 368, 369, and 390 each coordinate (2R)-2-phosphoglycerate. Residue lysine 339 is the Proton acceptor of the active site.

It belongs to the enolase family. The cofactor is Mg(2+).

The protein resides in the cytoplasm. The protein localises to the secreted. It localises to the cell surface. It catalyses the reaction (2R)-2-phosphoglycerate = phosphoenolpyruvate + H2O. The protein operates within carbohydrate degradation; glycolysis; pyruvate from D-glyceraldehyde 3-phosphate: step 4/5. Catalyzes the reversible conversion of 2-phosphoglycerate (2-PG) into phosphoenolpyruvate (PEP). It is essential for the degradation of carbohydrates via glycolysis. This Exiguobacterium sp. (strain ATCC BAA-1283 / AT1b) protein is Enolase.